The sequence spans 106 residues: Iron-sulfur cluster assembly protein CyaY (106 aa).

It belongs to the frataxin family.

In terms of biological role, involved in iron-sulfur (Fe-S) cluster assembly. May act as a regulator of Fe-S biogenesis. This Pectobacterium carotovorum subsp. carotovorum (strain PC1) protein is Iron-sulfur cluster assembly protein CyaY.